The primary structure comprises 711 residues: RB-associated KRAB zinc finger protein (711 aa).

The region spanning 8 to 79 (LSFKDVAVAF…EGDRHAQRHL (72 aa)) is the KRAB domain. Residues lysine 97 and lysine 256 each participate in a glycyl lysine isopeptide (Lys-Gly) (interchain with G-Cter in SUMO2) cross-link. The tract at residues 170-257 (AYGESLEDFN…YPRSQMELKP (88 aa)) is required for interaction with RB1. C2H2-type zinc fingers lie at residues 258–280 (FECT…QRAH) and 286–308 (YACS…RRSH). Lysine 312 participates in a covalent cross-link: Glycyl lysine isopeptide (Lys-Gly) (interchain with G-Cter in SUMO2). 6 C2H2-type zinc fingers span residues 314-336 (YKCN…QRTH), 342-364 (YECS…QRNH), 370-392 (YPCN…QRTH), 398-420 (YKCN…QRTH), 426-448 (YQCS…YRSH), and 454-476 (YECT…WKVH). Lysine 354 is covalently cross-linked (Glycyl lysine isopeptide (Lys-Gly) (interchain with G-Cter in SUMO2)). The tract at residues 414–711 (ITHQRTHTGE…TVNVLTVEKL (298 aa)) is interaction with AR. The C2H2-type 9; degenerate zinc finger occupies 508 to 530 (YECNECGKTFLDSSAFHRHQSVP). Lysine 534 is covalently cross-linked (Glycyl lysine isopeptide (Lys-Gly) (interchain with G-Cter in SUMO2)). 6 consecutive C2H2-type zinc fingers follow at residues 536–558 (YECN…YRGH), 564–586 (FGCS…QRVH), 592–614 (YECY…HRIH), 620–642 (YECS…YRSH), 648–670 (YECN…YRTH), and 676–698 (YECN…QRIH).

Belongs to the krueppel C2H2-type zinc-finger protein family. As to quaternary structure, interacts with AR. May also interact with other nuclear hormone receptors such as NR3C1/GR. Interacts with RB1.

It localises to the nucleus. Functionally, may repress E2F-dependent transcription. May promote AR-dependent transcription. The protein is RB-associated KRAB zinc finger protein (Rbak) of Mus musculus (Mouse).